The chain runs to 206 residues: MTDKLIGFYDPVRMKAERKTSETEIKLEMNLRGTGQYQFDTEIPFFEHMLSHISKHGLIDLNLWLRGDIEIDCHHSVEDTAILMGTTIHKQLGDKAGIFRYGHFTLTMDEVLTTVAVDLGGRYFFKYTGPELTGKFGIYDAELSLEFLQKLALNAKMNLHVVVHYGDNKHHVHESIFKALGKALRMAIAQDSAAAGAIPSTKGVLE.

Belongs to the imidazoleglycerol-phosphate dehydratase family.

It is found in the cytoplasm. The catalysed reaction is D-erythro-1-(imidazol-4-yl)glycerol 3-phosphate = 3-(imidazol-4-yl)-2-oxopropyl phosphate + H2O. It functions in the pathway amino-acid biosynthesis; L-histidine biosynthesis; L-histidine from 5-phospho-alpha-D-ribose 1-diphosphate: step 6/9. The protein is Imidazoleglycerol-phosphate dehydratase of Leptospira interrogans serogroup Icterohaemorrhagiae serovar copenhageni (strain Fiocruz L1-130).